The chain runs to 245 residues: MAAPTVTMQQLIEAGSHFGHQTHRWNPRMKPYIFGARNGVHIIDLSQTVPLMARALDFVHATANAGGKVLFVGTKRQAQEPIAEAARSSGQHFVNHRWLGGMLTNWQTISKSIKELKSLEEQLSGETHGLTKKEVLNLTRKRDKLELSLGGIRDMGGVPDVMVVIDANKEDLAIKEANVLGIPVVGILDTNVDPSGIAFPVPGNDDAARAVRLYCDAFAQAASKNGGGANVGEMENPPVEATADA.

A disordered region spans residues 226–245 (GGGANVGEMENPPVEATADA).

Belongs to the universal ribosomal protein uS2 family.

This is Small ribosomal subunit protein uS2 from Erythrobacter litoralis (strain HTCC2594).